A 289-amino-acid chain; its full sequence is Thymidylate synthase (289 aa).

DUMP-binding positions include Arg-21 and 150 to 151 (RR). Cys-170 serves as the catalytic Nucleophile. Residues 191 to 194 (RSAD), Asn-202, and 232 to 234 (HIY) each bind dUMP. Asp-194 provides a ligand contact to (6R)-5,10-methylene-5,6,7,8-tetrahydrofolate. (6R)-5,10-methylene-5,6,7,8-tetrahydrofolate is bound at residue Ala-288.

The protein belongs to the thymidylate synthase family. Bacterial-type ThyA subfamily. As to quaternary structure, homodimer.

Its subcellular location is the cytoplasm. The catalysed reaction is dUMP + (6R)-5,10-methylene-5,6,7,8-tetrahydrofolate = 7,8-dihydrofolate + dTMP. It participates in pyrimidine metabolism; dTTP biosynthesis. Functionally, catalyzes the reductive methylation of 2'-deoxyuridine-5'-monophosphate (dUMP) to 2'-deoxythymidine-5'-monophosphate (dTMP) while utilizing 5,10-methylenetetrahydrofolate (mTHF) as the methyl donor and reductant in the reaction, yielding dihydrofolate (DHF) as a by-product. This enzymatic reaction provides an intracellular de novo source of dTMP, an essential precursor for DNA biosynthesis. The protein is Thymidylate synthase of Malacoplasma penetrans (strain HF-2) (Mycoplasma penetrans).